The chain runs to 502 residues: Neuronal acetylcholine receptor subunit alpha-7 (502 aa).

Positions 1 to 23 (MGLRALMLWLLAAAGLVRESLQG) are cleaved as a signal peptide. At 24-233 (EFQRKLYKEL…VTMRRRTLYY (210 aa)) the chain is on the extracellular side. Arg-42 and Val-44 together coordinate Ca(2+). N-linked (GlcNAc...) asparagine glycosylation is found at Asn-46, Asn-90, and Asn-133. Cysteines 150 and 164 form a disulfide. Thr-172 and Tyr-210 together coordinate Ca(2+). A disulfide bridge links Cys-212 with Cys-213. Transmembrane regions (helical) follow at residues 234-254 (GLNLLIPCVLISALALLVFLL), 262-282 (ISLGITVLLSLTVFMLLVAEI), and 295-315 (QYFASTMIIVGLSVVVTVIVL). The Cytoplasmic portion of the chain corresponds to 316–469 (QYHHHDPDGG…WKFAASVVDR (154 aa)). Residues 470-490 (LCLMAFSVFTIICTIGILMSA) form a helical membrane-spanning segment.

It belongs to the ligand-gated ion channel (TC 1.A.9) family. Acetylcholine receptor (TC 1.A.9.1) subfamily. Alpha-7/CHRNA7 sub-subfamily. Homopentamer. Can also form heteropentamers with CHRNB2, mainly found in basal forebrain cholinergic neurons.

It localises to the postsynaptic cell membrane. Its subcellular location is the cell membrane. It carries out the reaction Ca(2+)(in) = Ca(2+)(out). It catalyses the reaction K(+)(in) = K(+)(out). The enzyme catalyses Na(+)(in) = Na(+)(out). The catalysed reaction is choline(out) = choline(in). It carries out the reaction NH4(+)(in) = NH4(+)(out). It catalyses the reaction L-arginine(in) = L-arginine(out). The enzyme catalyses guanidine(out) = guanidine(in). With respect to regulation, activated by a myriad of ligands such as acetylcholine, cytisine, nicotine, choline and epibatidine. Activity is modulated by positive allosteric modulators (PAMs), such as flavonoids, with a wide range of chemical diversity, pharmacological sensitivity and efficacy. AChR activity is inhibited by the antagonists alpha-conotoxons RgIA, ImI and ImII, small disulfide-constrained peptides from cone snails. In terms of biological role, component of neuronal acetylcholine receptors (nAChRs) that function as pentameric, ligand-gated cation channels with high calcium permeability among other activities. nAChRs are excitatory neurotrasnmitter receptors formed by a collection of nAChR subunits known to mediate synaptic transmission in the nervous system and the neuromuscular junction. Each nAchR subunit confers differential attributes to channel properties, including activation, deactivation and desensitization kinetics, pH sensitivity, cation permeability, and binding to allosteric modulators. CHRNA7 is an homooligomeric neuronal acetylcholine receptor abundantly expressed in the central nervous system. Characterized by a fast desensitization and high calcium permeability. Also expressed in non-neuronal cells such as immune cells like lymphocytes, monocytes and macrophages. The chain is Neuronal acetylcholine receptor subunit alpha-7 (CHRNA7) from Gallus gallus (Chicken).